Reading from the N-terminus, the 85-residue chain is Cell division protein ZapA (85 aa).

Positions 59–85 (TAVNVVHDYMKLQEKYEILERQLKEKE) form a coiled coil.

The protein belongs to the ZapA family. Type 2 subfamily. Homodimer. Interacts with FtsZ.

The protein resides in the cytoplasm. Its function is as follows. Activator of cell division through the inhibition of FtsZ GTPase activity, therefore promoting FtsZ assembly into bundles of protofilaments necessary for the formation of the division Z ring. It is recruited early at mid-cell but it is not essential for cell division. The protein is Cell division protein ZapA of Bacillus velezensis (strain DSM 23117 / BGSC 10A6 / LMG 26770 / FZB42) (Bacillus amyloliquefaciens subsp. plantarum).